A 507-amino-acid polypeptide reads, in one-letter code: Serine/threonine-protein kinase BSK11 (507 aa).

The N-myristoyl glycine moiety is linked to residue Gly2. Residues Asp16–Gly26 show a composition bias toward basic and acidic residues. The disordered stretch occupies residues Asp16 to Asn44. Residues Arg27 to Ala41 are compositionally biased toward basic residues. Residues Asn75–Leu332 enclose the Protein kinase domain. ATP contacts are provided by residues Cys81–Val89 and Lys106. The active-site Proton acceptor is Asp200.

The protein belongs to the protein kinase superfamily. Ser/Thr protein kinase family. As to quaternary structure, interacts with BRI1, ASK7/BIN2, BSK1, BSK6 and BSK8. Post-translationally, phosphorylated by BRI1, ASK7/BIN2 and ASK9/BIL2.

It localises to the cell membrane. The enzyme catalyses L-seryl-[protein] + ATP = O-phospho-L-seryl-[protein] + ADP + H(+). It catalyses the reaction L-threonyl-[protein] + ATP = O-phospho-L-threonyl-[protein] + ADP + H(+). Functionally, probable serine/threonine kinase that acts as a positive regulator of brassinosteroid (BR) signaling downstream of the receptor kinase BRI1. The polypeptide is Serine/threonine-protein kinase BSK11 (Arabidopsis thaliana (Mouse-ear cress)).